The following is a 284-amino-acid chain: Four and a half LIM domains protein 5 (284 aa).

The C4-type zinc finger occupies 8-32 (CQYCTASLLGKKYVLKDDNLYCISC). 4 LIM zinc-binding domains span residues 39 to 100 (NYCE…ECSS), 101 to 160 (KCFH…KEFA), 161 to 220 (HYCN…LYAK), and 221 to 283 (KCAA…ADTD).

As to quaternary structure, interacts with CREM (via the third LIM domain). Interacts (via second LIM domain) with SPAG8.

It localises to the nucleus. Its function is as follows. May be involved in the regulation of spermatogenesis. Stimulates CREM transcriptional activity in a phosphorylation-independent manner. The sequence is that of Four and a half LIM domains protein 5 (Fhl5) from Rattus norvegicus (Rat).